A 213-amino-acid chain; its full sequence is GTP cyclohydrolase 1 (213 aa).

Positions 104, 107, and 175 each coordinate Zn(2+).

It belongs to the GTP cyclohydrolase I family. Toroid-shaped homodecamer, composed of two pentamers of five dimers.

It catalyses the reaction GTP + H2O = 7,8-dihydroneopterin 3'-triphosphate + formate + H(+). Its pathway is cofactor biosynthesis; 7,8-dihydroneopterin triphosphate biosynthesis; 7,8-dihydroneopterin triphosphate from GTP: step 1/1. The protein is GTP cyclohydrolase 1 of Brucella abortus (strain 2308).